The following is a 217-amino-acid chain: UPF0502 protein VF_A0604 (217 aa).

This sequence belongs to the UPF0502 family.

The sequence is that of UPF0502 protein VF_A0604 from Aliivibrio fischeri (strain ATCC 700601 / ES114) (Vibrio fischeri).